Here is a 374-residue protein sequence, read N- to C-terminus: Protein-glutamate methylesterase/protein-glutamine glutaminase 1 (374 aa).

The Response regulatory domain occupies 4–121; it reads KVLVVDDSSF…ATNKDEAILL (118 aa). 4-aspartylphosphate is present on D55. The tract at residues 141–170 is disordered; the sequence is PSVAPVTPRPTTGSAVGNATTPVQSASAPV. Residues 149-167 show a composition bias toward polar residues; it reads RPTTGSAVGNATTPVQSAS. The CheB-type methylesterase domain occupies 174 to 374; that stretch reads PLSSIRASGK…ESILKESARG (201 aa). Active-site residues include S193, H220, and D316.

The protein belongs to the CheB family. Post-translationally, phosphorylated by CheA. Phosphorylation of the N-terminal regulatory domain activates the methylesterase activity.

Its subcellular location is the cytoplasm. The enzyme catalyses [protein]-L-glutamate 5-O-methyl ester + H2O = L-glutamyl-[protein] + methanol + H(+). The catalysed reaction is L-glutaminyl-[protein] + H2O = L-glutamyl-[protein] + NH4(+). Involved in chemotaxis. Part of a chemotaxis signal transduction system that modulates chemotaxis in response to various stimuli. Catalyzes the demethylation of specific methylglutamate residues introduced into the chemoreceptors (methyl-accepting chemotaxis proteins or MCP) by CheR. Also mediates the irreversible deamidation of specific glutamine residues to glutamic acid. The polypeptide is Protein-glutamate methylesterase/protein-glutamine glutaminase 1 (Shewanella oneidensis (strain ATCC 700550 / JCM 31522 / CIP 106686 / LMG 19005 / NCIMB 14063 / MR-1)).